The sequence spans 492 residues: Malonyl-CoA decarboxylase, mitochondrial (492 aa).

Residues 1–38 (MRGLGPSLRARRLLPLRYPPRPPGPRGPRLCSGLTASA) constitute a mitochondrion transit peptide. An alpha-helical domain region spans residues 39-189 (MDELLRRAVP…VLKSMLSEWF (151 aa)). At Lys-58 the chain carries N6-acetyllysine. Lys-167 carries the post-translational modification N6-acetyllysine; alternate. Lys-167 bears the N6-succinyllysine; alternate mark. Residues 190–492 (SSGFLNLERV…VAQFQSNSKL (303 aa)) are catalytic domain. Lys-210 is subject to N6-acetyllysine. Position 221 is an N6-succinyllysine (Lys-221). 298–304 (QGVELGT) is a binding site for malonyl-CoA. Lys-316 bears the N6-acetyllysine mark. Ser-328 serves as a coordination point for malonyl-CoA. Catalysis depends on Ser-328, which acts as the Proton acceptor. At Lys-385 the chain carries N6-acetyllysine; alternate. Lys-385 carries the post-translational modification N6-succinyllysine; alternate. Lys-388 carries the N6-acetyllysine modification. Residue His-422 participates in malonyl-CoA binding. His-422 serves as the catalytic Proton donor. An N6-acetyllysine mark is found at Lys-441 and Lys-471. Positions 490–492 (SKL) match the Microbody targeting signal motif.

Homotetramer. Dimer of dimers. The two subunits within a dimer display conformational differences suggesting that at any given moment, only one of the two subunits is competent for malonyl-CoA binding and catalytic activity. Under oxidizing conditions, can form disulfide-linked homotetramers (in vitro). Associates with the peroxisomal targeting signal receptor PEX5. Acetylation at Lys-471 activates malonyl-CoA decarboxylase activity. Deacetylation at Lys-471 by SIRT4 represses activity, leading to promote lipogenesis. In terms of processing, interchain disulfide bonds may form in peroxisomes (Potential). Interchain disulfide bonds are not expected to form in the reducing environment of the cytoplasm and mitochondria. As to expression, expressed in liver, heart, skeletal muscles and adipose tissues (at protein level). Ubiquitous. Strongly expressed in liver, kidney, heart, skeletal muscle and adipose tissues. Weakly expressed in brain.

The protein resides in the cytoplasm. It localises to the mitochondrion matrix. Its subcellular location is the peroxisome. It is found in the peroxisome matrix. It catalyses the reaction malonyl-CoA + H(+) = acetyl-CoA + CO2. The protein operates within metabolic intermediate biosynthesis; acetyl-CoA biosynthesis; acetyl-CoA from malonyl-CoA: step 1/1. With respect to regulation, malonyl-CoA decarboxylase activity does not require any cofactors or divalent metal ions. Its function is as follows. Catalyzes the conversion of malonyl-CoA to acetyl-CoA. In the fatty acid biosynthesis MCD selectively removes malonyl-CoA and thus assures that methyl-malonyl-CoA is the only chain elongating substrate for fatty acid synthase and that fatty acids with multiple methyl side chains are produced. In peroxisomes it may be involved in degrading intraperoxisomal malonyl-CoA, which is generated by the peroxisomal beta-oxidation of odd chain-length dicarboxylic fatty acids. Plays a role in the metabolic balance between glucose and lipid oxidation in muscle independent of alterations in insulin signaling. May play a role in controlling the extent of ischemic injury by promoting glucose oxidation. In Rattus norvegicus (Rat), this protein is Malonyl-CoA decarboxylase, mitochondrial.